We begin with the raw amino-acid sequence, 391 residues long: DNA-directed RNA polymerase I subunit RPA43 (391 aa).

2 disordered regions span residues 1-27 and 220-391; these read MANWTQEDGAPTPVTNPSEVSQVSGGS and QKQV…KKSK. A compositionally biased stretch (basic residues) spans 288 to 299; the sequence is GRHKEKKKKKKR. Residues 289–353 adopt a coiled-coil conformation; the sequence is RHKEKKKKKK…RDKQQDSAEI (65 aa). Positions 312–323 are enriched in polar residues; that stretch reads MNNNSLQETALD. Residues 336–345 show a composition bias toward basic residues; the sequence is KEKKKKKKRD.

Belongs to the eukaryotic RPA43 RNA polymerase subunit family. Component of the RNA polymerase I (Pol I) complex consisting of at least 13 subunits.

The protein resides in the nucleus. It localises to the nucleolus. Functionally, DNA-dependent RNA polymerase catalyzes the transcription of DNA into RNA using the four ribonucleoside triphosphates as substrates. Component of RNA polymerase I which synthesizes ribosomal RNA precursors. May be involved in recruitment of Pol I to rDNA promoters. The protein is DNA-directed RNA polymerase I subunit RPA43 of Danio rerio (Zebrafish).